Here is a 332-residue protein sequence, read N- to C-terminus: Malate dehydrogenase, cytoplasmic (332 aa).

Residues Gln-16–Ile-17, Asp-43, and Gly-90 contribute to the NAD(+) site. Arg-99 provides a ligand contact to oxaloacetate. Positions 113 and 132 each coordinate NAD(+). 4 residues coordinate oxaloacetate: Asn-132, Arg-163, His-188, and Ser-243. His-188 serves as the catalytic Proton acceptor.

It belongs to the LDH/MDH superfamily. MDH type 2 family. Monomer. Expressed constitutively in roots.

The protein localises to the cell membrane. The enzyme catalyses (S)-malate + NAD(+) = oxaloacetate + NADH + H(+). Functionally, malate dehydrogenase; catalyzes a reversible NAD-dependent dehydrogenase reaction involved in central metabolism and redox homeostasis. In Zea mays (Maize), this protein is Malate dehydrogenase, cytoplasmic.